The primary structure comprises 462 residues: A-type ATP synthase subunit B (462 aa).

Belongs to the ATPase alpha/beta chains family. In terms of assembly, has multiple subunits with at least A(3), B(3), C, D, E, F, H, I and proteolipid K(x).

It is found in the cell membrane. Functionally, component of the A-type ATP synthase that produces ATP from ADP in the presence of a proton gradient across the membrane. The B chain is a regulatory subunit. The chain is A-type ATP synthase subunit B from Methanococcus maripaludis (strain C6 / ATCC BAA-1332).